Reading from the N-terminus, the 956-residue chain is RNA-silencing factor ers1 (956 aa).

It localises to the cytoplasm. Its subcellular location is the cytoskeleton. The protein localises to the microtubule organizing center. The protein resides in the spindle pole body. Involved in RNAi-dependent heterochromatin formation and centromeric silencing. Required for the conversion of centromeric pre-small interfering RNA transcripts into small interfering RNAs, histone H3 'Lys9' methylation, and the recruitment of the RITS complex to centromeric sequences. The chain is RNA-silencing factor ers1 (ers1) from Schizosaccharomyces pombe (strain 972 / ATCC 24843) (Fission yeast).